We begin with the raw amino-acid sequence, 369 residues long: Trans-enoyl reductase pyiC (369 aa).

Position 52–55 (52–55 (CDYK)) interacts with NADP(+). 137 to 144 (TGIGTLGM) contributes to the substrate binding site. Residues 195 to 198 (SPKN), tyrosine 213, and 260 to 261 (LE) contribute to the NADP(+) site. 280–284 (GPLLL) is a substrate binding site. NADP(+) is bound at residue 349–350 (VS).

It belongs to the zinc-containing alcohol dehydrogenase family. In terms of assembly, monomer.

Its pathway is mycotoxin biosynthesis. Trans-enoyl reductase; part of the gene cluster that mediates the biosynthesis of the mycotoxin pyrichalasin H, a tyrosine-derived cytochalasan that inhibits the growth of rice seedlings, but also inhibits lymphocyte capping and actin polymerization and alters cell morphology. Pyrichalasin H is indicated as the responsible agent for the genus-specific pathogenicity of M.grisea toward crabgrass. The first step in the pathway is catalyzed by the O-methyltransferase pyiA which methylates free tyrosine to generate the precursor O-methyltyrosine. The hybrid PKS-NRPS pyiS, assisted by the enoyl reductase pyiC, are responsible for fusion of the O-methyltyrosine precursor and the polyketide backbone. The polyketide synthase module (PKS) of pyiS is responsible for the synthesis of the polyketide backbone and the downstream nonribosomal peptide synthetase (NRPS) amidates the carboxyl end of the polyketide with the O-methyltyrosine precursor. As the NRPS A-domain demonstrates substrate tolerance, pyiS can also use phenylalanine, tyrosine and even para-chlorophenylalanine as amino acid precursor, which leads to the production of novel cytochalasans, including halogenated cytochalasans. Because pyiS lacks a designated enoylreductase (ER) domain, the required activity is provided the enoyl reductase pyiC. Reduction by the hydrolyase pyiE, followed by dehydration and intra-molecular Diels-Alder cyclization by the Diels-Alderase pyiF then yield the required isoindolone-fused macrocycle. The tailoring cytochrome P450 monooxygenases piyD and piyG catalyze the hydroxylation at C-18 and C-7, respectivily, whereas the short-chain dehydrogenase/reductase pyiH reduces the carbonyl at C-21 in preparation for the transfer of an acetyl group by the acetyltransferase pyiB. These 3 reactions whose order is not clear yet, lead to the production of O-methylpyrichalasin J, a deacetylated pyrichalasin H. Finally, pyiB to converts O-methylpyrichalasin J into the final product pyrichalasin H via acetylation of C-21. The protein is Trans-enoyl reductase pyiC of Pyricularia grisea (Crabgrass-specific blast fungus).